Here is a 337-residue protein sequence, read N- to C-terminus: DNA-directed RNA polymerase subunit alpha (337 aa).

The tract at residues 1–233 (MIQKNWQELI…DQLSIFVNFE (233 aa)) is alpha N-terminal domain (alpha-NTD). Residues 249 to 337 (FNPALLKKVD…DLAKRYEDQY (89 aa)) are alpha C-terminal domain (alpha-CTD).

It belongs to the RNA polymerase alpha chain family. As to quaternary structure, homodimer. The RNAP catalytic core consists of 2 alpha, 1 beta, 1 beta' and 1 omega subunit. When a sigma factor is associated with the core the holoenzyme is formed, which can initiate transcription.

The enzyme catalyses RNA(n) + a ribonucleoside 5'-triphosphate = RNA(n+1) + diphosphate. Its function is as follows. DNA-dependent RNA polymerase catalyzes the transcription of DNA into RNA using the four ribonucleoside triphosphates as substrates. This chain is DNA-directed RNA polymerase subunit alpha, found in Brucella ovis (strain ATCC 25840 / 63/290 / NCTC 10512).